Consider the following 742-residue polypeptide: G2/M phase-specific E3 ubiquitin-protein ligase (742 aa).

A C2HC pre-PHD-type zinc finger spans residues 10-50 (SPPCVLCGWTDNCPEKYGEKRTYVEYNLTLHNYCLLMSSGI). The PHD-type 1 zinc finger occupies 78-127 (LMCNICRKKGASIGCVAPKCKRSYHFPCGLQKECVFQFMEDFRSYCWEHK). A PHD-type 2; degenerate zinc finger spans residues 142–192 (QCTICLDLVEHLPLYSVLRSPCCKNTWFHRECLQYQALSAGIFFFRCAVCN). Residues 236–285 (RCLCKNGRDYNKPDSKWEIKRCQSCGSRGTHLACSSIKSWEQNWECVECR) form a PHD-type 3 zinc finger. An HECT domain is found at 417–742 (KGFRQRNFRP…IRSTLRGERE (326 aa)).

Its subcellular location is the nucleus. It localises to the nucleolus. It is found in the cytoplasm. The enzyme catalyses S-ubiquitinyl-[E2 ubiquitin-conjugating enzyme]-L-cysteine + [acceptor protein]-L-lysine = [E2 ubiquitin-conjugating enzyme]-L-cysteine + N(6)-ubiquitinyl-[acceptor protein]-L-lysine.. The protein operates within protein modification; protein ubiquitination. In terms of biological role, E3 ubiquitin-protein ligase which accepts ubiquitin from an E2 ubiquitin-conjugating enzyme in the form of a thioester and then directly transfers the ubiquitin to targeted substrates. Essential in early embryonic development to prevent apoptotic death. In Gallus gallus (Chicken), this protein is G2/M phase-specific E3 ubiquitin-protein ligase (G2E3).